Reading from the N-terminus, the 368-residue chain is Seipin-1 (368 aa).

3 helical membrane-spanning segments follow: residues 26–46 (WFMVLVTIQADLIYNALVVLS), 101–121 (VMVLALILAVVIGVGIVSLYV), and 292–312 (LCVWTSMYLYVAILTALLWCF). Residues 344–368 (MERRRRERRNQPRRRNFATTQKSYT) form a disordered region. Basic residues predominate over residues 346–359 (RRRRERRNQPRRRN).

It belongs to the seipin family. Expressed in seeds and young seedlings. Not detected in leaves.

The protein resides in the endoplasmic reticulum membrane. In terms of biological role, involved in lipid metabolism and lipid droplet (LD) morphology, number, and size. Facilitates the formation of large-sized LDs and modulates triacylglycerol accumulation. Induces probably a reorganization of the endoplasmic reticulum into LD-forming domains. In Arabidopsis thaliana (Mouse-ear cress), this protein is Seipin-1.